A 399-amino-acid polypeptide reads, in one-letter code: Dual-specificity RNA methyltransferase RlmN (399 aa).

E122 (proton acceptor) is an active-site residue. The region spanning 128–371 (ETDRGTLCVS…VRTPRGRDIL (244 aa)) is the Radical SAM core domain. A disulfide bond links C135 and C374. 3 residues coordinate [4Fe-4S] cluster: C142, C146, and C149. Residues 200–201 (GE), S232, 254–256 (SLH), and N331 each bind S-adenosyl-L-methionine. C374 (S-methylcysteine intermediate) is an active-site residue.

It belongs to the radical SAM superfamily. RlmN family. Requires [4Fe-4S] cluster as cofactor.

It is found in the cytoplasm. The catalysed reaction is adenosine(2503) in 23S rRNA + 2 reduced [2Fe-2S]-[ferredoxin] + 2 S-adenosyl-L-methionine = 2-methyladenosine(2503) in 23S rRNA + 5'-deoxyadenosine + L-methionine + 2 oxidized [2Fe-2S]-[ferredoxin] + S-adenosyl-L-homocysteine. It catalyses the reaction adenosine(37) in tRNA + 2 reduced [2Fe-2S]-[ferredoxin] + 2 S-adenosyl-L-methionine = 2-methyladenosine(37) in tRNA + 5'-deoxyadenosine + L-methionine + 2 oxidized [2Fe-2S]-[ferredoxin] + S-adenosyl-L-homocysteine. In terms of biological role, specifically methylates position 2 of adenine 2503 in 23S rRNA and position 2 of adenine 37 in tRNAs. m2A2503 modification seems to play a crucial role in the proofreading step occurring at the peptidyl transferase center and thus would serve to optimize ribosomal fidelity. The polypeptide is Dual-specificity RNA methyltransferase RlmN (Rhodopseudomonas palustris (strain BisB18)).